A 307-amino-acid polypeptide reads, in one-letter code: Aspartate carbamoyltransferase catalytic subunit (307 aa).

Positions 59 and 60 each coordinate carbamoyl phosphate. Residue lysine 87 coordinates L-aspartate. Residues arginine 109, histidine 139, and glutamine 142 each coordinate carbamoyl phosphate. Arginine 172 and arginine 224 together coordinate L-aspartate. Carbamoyl phosphate contacts are provided by alanine 265 and proline 266.

It belongs to the aspartate/ornithine carbamoyltransferase superfamily. ATCase family. As to quaternary structure, heterododecamer (2C3:3R2) of six catalytic PyrB chains organized as two trimers (C3), and six regulatory PyrI chains organized as three dimers (R2).

The enzyme catalyses carbamoyl phosphate + L-aspartate = N-carbamoyl-L-aspartate + phosphate + H(+). It participates in pyrimidine metabolism; UMP biosynthesis via de novo pathway; (S)-dihydroorotate from bicarbonate: step 2/3. Functionally, catalyzes the condensation of carbamoyl phosphate and aspartate to form carbamoyl aspartate and inorganic phosphate, the committed step in the de novo pyrimidine nucleotide biosynthesis pathway. The polypeptide is Aspartate carbamoyltransferase catalytic subunit (Streptococcus agalactiae serotype Ia (strain ATCC 27591 / A909 / CDC SS700)).